The chain runs to 425 residues: MNNIVIVGLQWGDEGKGKIVDYLSENADVVVRFQGGNNAGHTIVVDDEVYKLNLLPSAVLRPGKISIIGNGVALDPHALISEIESLKVKGVDVNYNNLMVSESCPLILSIHKDKEKLFEDLNGNHKIGTTNKGIGPCYEDKVGRRAIRLCDLENADELNKRVDILLNYHNAIRKGLNYQVVKKEEILKEIQEISEKILSYKKPVWKILNDLMKEGKKIIFEGAQGAFLDIDHGTYPFVTSSNTVASQAITGSGLSSNAYIIGVVKAYTTRVGNGPFPTEQKNEVGDSLFTIGKELGTVSNRRRRCGWFDAVLVRQAVQLSGVSSIVLTKLDVLNSFDTIKICTGYKYSGKMYDYLPASHSIQGELEPIYEEFPGWKENTQGKRSIETLPINLIKYIEGLEKLIGVPIHLISTSPKREDVIKLKDF.

Residues 12 to 18 (GDEGKGK) and 40 to 42 (GHT) each bind GTP. The Proton acceptor role is filled by Asp-13. Mg(2+)-binding residues include Asp-13 and Gly-40. Residues 13–16 (DEGK), 38–41 (NAGH), Thr-130, Arg-144, Gln-224, Thr-239, and Arg-301 contribute to the IMP site. His-41 serves as the catalytic Proton donor. Residue 297-303 (TVSNRRR) participates in substrate binding. GTP contacts are provided by residues Arg-303, 329–331 (KLD), and 411–413 (STS).

Belongs to the adenylosuccinate synthetase family. As to quaternary structure, homodimer. The cofactor is Mg(2+).

The protein localises to the cytoplasm. The enzyme catalyses IMP + L-aspartate + GTP = N(6)-(1,2-dicarboxyethyl)-AMP + GDP + phosphate + 2 H(+). The protein operates within purine metabolism; AMP biosynthesis via de novo pathway; AMP from IMP: step 1/2. In terms of biological role, plays an important role in the de novo pathway of purine nucleotide biosynthesis. Catalyzes the first committed step in the biosynthesis of AMP from IMP. The chain is Adenylosuccinate synthetase from Wolbachia pipientis wMel.